Reading from the N-terminus, the 248-residue chain is Triosephosphate isomerase (248 aa).

Residue 9-11 (NWK) coordinates substrate. The active-site Electrophile is histidine 94. Glutamate 166 functions as the Proton acceptor in the catalytic mechanism. Substrate-binding positions include glycine 172, serine 212, and 233–234 (GG).

The protein belongs to the triosephosphate isomerase family. In terms of assembly, homodimer.

The protein resides in the cytoplasm. It catalyses the reaction D-glyceraldehyde 3-phosphate = dihydroxyacetone phosphate. The protein operates within carbohydrate biosynthesis; gluconeogenesis. It participates in carbohydrate degradation; glycolysis; D-glyceraldehyde 3-phosphate from glycerone phosphate: step 1/1. Its function is as follows. Involved in the gluconeogenesis. Catalyzes stereospecifically the conversion of dihydroxyacetone phosphate (DHAP) to D-glyceraldehyde-3-phosphate (G3P). The protein is Triosephosphate isomerase of Clostridium beijerinckii (strain ATCC 51743 / NCIMB 8052) (Clostridium acetobutylicum).